We begin with the raw amino-acid sequence, 72 residues long: Probable protein transport protein Sec61 subunit gamma (72 aa).

The Cytoplasmic portion of the chain corresponds to 1-40 (MSQKLQKPSFLSEYLRSIRLFSKKCVRPSGKELSMSIKRH). Residues 41-61 (AIGIGFLGILGYAIKLIHIPI) form a helical membrane-spanning segment. The Extracellular portion of the chain corresponds to 62 to 72 (NNIIVSSPGKE).

The protein belongs to the SecE/SEC61-gamma family. Heterotrimeric complex composed of SEC61-alpha, SEC61-beta and SEC61-gamma.

It localises to the endoplasmic reticulum membrane. In terms of biological role, necessary for protein translocation in the endoplasmic reticulum. The polypeptide is Probable protein transport protein Sec61 subunit gamma (Encephalitozoon cuniculi (strain GB-M1) (Microsporidian parasite)).